Here is a 765-residue protein sequence, read N- to C-terminus: Putative U-box domain-containing protein 50 (765 aa).

The stretch at 198 to 391 (QEIENYFQQL…NRRIEFCKER (194 aa)) forms a coiled coil. Positions 422 to 765 (SDRLRLKSGG…HSKRAAQASS (344 aa)) constitute a Protein kinase domain. ATP is bound by residues 428–436 (KSGGNWTNV) and Lys-449. One can recognise a U-box domain in the interval 688 to 762 (DIPSVFMCPI…QDWHSKRAAQ (75 aa)).

Belongs to the protein kinase superfamily. Ser/Thr protein kinase family.

The catalysed reaction is S-ubiquitinyl-[E2 ubiquitin-conjugating enzyme]-L-cysteine + [acceptor protein]-L-lysine = [E2 ubiquitin-conjugating enzyme]-L-cysteine + N(6)-ubiquitinyl-[acceptor protein]-L-lysine.. Its pathway is protein modification; protein ubiquitination. Functions as an E3 ubiquitin ligase. The polypeptide is Putative U-box domain-containing protein 50 (PUB50) (Arabidopsis thaliana (Mouse-ear cress)).